The following is a 557-amino-acid chain: uncharacterized protein (557 aa).

Positions 2–45 (NEDETSILNKKMEKIEVEMAEFERLGAEREKEAVERIVQEENQN) form a coiled coil. Disordered regions lie at residues 39-62 (VQEENQNPEVPSNDDASTDIKSRK), 101-127 (NRTYYKNSQGYRRKPKRDDYNNNRKNF), 356-402 (PSPS…YPSN), and 536-557 (ANATSQPLSNLDTGGSAPYDHI). 4 stretches are compositionally biased toward polar residues: residues 101-110 (NRTYYKNSQG), 358-380 (PSFQEEFPSTSKSPSATPGSSNA), 390-400 (DSATYPTSIYP), and 536-548 (ANATSQPLSNLDT).

Its subcellular location is the cytoplasm. It localises to the nucleus. This is an uncharacterized protein from Schizosaccharomyces pombe (strain 972 / ATCC 24843) (Fission yeast).